The primary structure comprises 132 residues: Intraflagellar transport protein 20 homolog A (132 aa).

The stretch at 87 to 112 forms a coiled coil; that stretch reads EAQQQQLYALIAEKKMQLERYRIEYD.

The protein resides in the golgi apparatus. The protein localises to the cis-Golgi network. It is found in the cytoplasm. It localises to the cytoskeleton. Its subcellular location is the microtubule organizing center. The protein resides in the centrosome. The protein localises to the centriole. It is found in the cell projection. It localises to the cilium. Involved in ciliary process assembly. May play a role in the trafficking of ciliary membrane proteins from the Golgi complex to the cilium. Regulates the platelet-derived growth factor receptor-alpha (PDGFRA) signaling pathway. Plays an important role in spermatogenesis, particularly spermiogenesis, when germ cells form flagella. The chain is Intraflagellar transport protein 20 homolog A (ift20-a) from Xenopus laevis (African clawed frog).